The primary structure comprises 206 residues: Na(+)-translocating NADH-quinone reductase subunit E (206 aa).

The next 6 helical transmembrane spans lie at 12-32, 36-56, 85-105, 118-138, 148-168, and 184-204; these read AVFV…FLAV, ISSA…TVPV, FLGL…LEMF, GVFL…LFMV, VIYG…LAGI, and LGIT…FSGI.

It belongs to the NqrDE/RnfAE family. Composed of six subunits; NqrA, NqrB, NqrC, NqrD, NqrE and NqrF.

It localises to the cell inner membrane. It catalyses the reaction a ubiquinone + n Na(+)(in) + NADH + H(+) = a ubiquinol + n Na(+)(out) + NAD(+). NQR complex catalyzes the reduction of ubiquinone-1 to ubiquinol by two successive reactions, coupled with the transport of Na(+) ions from the cytoplasm to the periplasm. NqrA to NqrE are probably involved in the second step, the conversion of ubisemiquinone to ubiquinol. In Chromohalobacter salexigens (strain ATCC BAA-138 / DSM 3043 / CIP 106854 / NCIMB 13768 / 1H11), this protein is Na(+)-translocating NADH-quinone reductase subunit E.